The following is a 956-amino-acid chain: RNA-binding protein 44 (956 aa).

Residues 301 to 321 (DNTQNNQNQSYNPTEENDHNV) form a disordered region. The 75-residue stretch at 750-824 (SLLCITCLPG…HAVQVVHLSG (75 aa)) folds into the RRM domain. The interval 831–855 (KPSDLSHSASESHKEDTAGDELRTK) is disordered. The segment covering 840–854 (SESHKEDTAGDELRT) has biased composition (basic and acidic residues).

It localises to the cytoplasm. In terms of biological role, component of intercellular bridges during meiosis. Intercellular bridges are evolutionarily conserved structures that connect differentiating germ cells. Not required for fertility. In Danio rerio (Zebrafish), this protein is RNA-binding protein 44 (rbm44).